Here is a 403-residue protein sequence, read N- to C-terminus: Argininosuccinate synthase (403 aa).

Residues 13–21 (AYSGGLDTS) and Ala40 contribute to the ATP site. 2 residues coordinate L-citrulline: Tyr92 and Ser97. Gly122 is a binding site for ATP. Positions 124, 128, and 129 each coordinate L-aspartate. An L-citrulline-binding site is contributed by Asn128. 5 residues coordinate L-citrulline: Arg132, Ser181, Ser190, Glu266, and Tyr278.

Belongs to the argininosuccinate synthase family. Type 1 subfamily. Homotetramer.

The protein resides in the cytoplasm. It carries out the reaction L-citrulline + L-aspartate + ATP = 2-(N(omega)-L-arginino)succinate + AMP + diphosphate + H(+). It functions in the pathway amino-acid biosynthesis; L-arginine biosynthesis; L-arginine from L-ornithine and carbamoyl phosphate: step 2/3. The protein is Argininosuccinate synthase of Aliivibrio salmonicida (strain LFI1238) (Vibrio salmonicida (strain LFI1238)).